The chain runs to 246 residues: tRNA (guanine-N(1)-)-methyltransferase (246 aa).

Residues Gly112 and 131-136 (IGDYVL) each bind S-adenosyl-L-methionine.

This sequence belongs to the RNA methyltransferase TrmD family. As to quaternary structure, homodimer.

The protein resides in the cytoplasm. It catalyses the reaction guanosine(37) in tRNA + S-adenosyl-L-methionine = N(1)-methylguanosine(37) in tRNA + S-adenosyl-L-homocysteine + H(+). Functionally, specifically methylates guanosine-37 in various tRNAs. The polypeptide is tRNA (guanine-N(1)-)-methyltransferase (Fervidobacterium nodosum (strain ATCC 35602 / DSM 5306 / Rt17-B1)).